We begin with the raw amino-acid sequence, 76 residues long: U-actitoxin-Avd8c (76 aa).

The first 16 residues, Leu-1 to Ala-16, serve as a signal peptide directing secretion. Residues Asn-17 to Arg-33 constitute a propeptide that is removed on maturation.

Belongs to the sea anemone 8 toxin family.

The protein resides in the secreted. The protein localises to the nematocyst. This chain is U-actitoxin-Avd8c, found in Anemonia viridis (Snakelocks anemone).